The sequence spans 292 residues: Potassium channel, subfamily K, member 16 (292 aa).

Topologically, residues 1–13 (MPRAGVCGCWGGQ) are cytoplasmic. The chain crosses the membrane as a helical span at residues 14–34 (VLPLLLAYICYLLLGATIFQL). Residues 98–116 (SFFFAGTVVTTIGYGNLAP) constitute an intramembrane region (pore-forming). K(+)-binding residues include Thr-108, Ile-109, Gly-110, and Tyr-111. Positions 108–113 (TIGYGN) are selectivity filter 1. Residues 120 to 140 (AGQVFCVFYALMGIPLNVVFL) form a helical membrane-spanning segment. The Cytoplasmic segment spans residues 141–165 (NHLGTGLRAHLTTLDRWEDHPRHSQ). Residues 166–186 (LLQVLGLALFLTLGTLVILIF) form a helical membrane-spanning segment. Residues 202 to 221 (GFYFAFITLSTIGFGDYVVG) constitute an intramembrane region (pore-forming). Positions 212, 213, 214, and 215 each coordinate K(+). A selectivity filter 2 region spans residues 212 to 217 (TIGFGD). The helical transmembrane segment at 238 to 258 (IWILLGLAWLAVVLSLGSLLL) threads the bilayer. At 259-292 (HRCSRLWQLIRGLDLKDGAAPDSEPRSQKIPISA) the chain is on the cytoplasmic side.

Belongs to the two pore domain potassium channel (TC 1.A.1.8) family. Homodimer; disulfide-linked. Heterodimer with KCNK17 and KCNK5. As to expression, expressed in pacreatic beta-cells (at protein level). Expressed in pacreatic delta-cells (at protein level).

The protein localises to the cell membrane. It is found in the endoplasmic reticulum membrane. Its subcellular location is the mitochondrion inner membrane. The enzyme catalyses K(+)(in) = K(+)(out). The catalysed reaction is Rb(+)(in) = Rb(+)(out). It catalyses the reaction Cs(+)(in) = Cs(+)(out). Its function is as follows. K(+) channel that conducts voltage-dependent outward rectifying currents upon membrane depolarization. Voltage sensing is coupled to K(+) electrochemical gradient in an 'ion flux gating' mode where outward but not inward ion flow opens the gate. Homo- and heterodimerizes to form functional channels with distinct regulatory and gating properties. In pancreatic islets, conducts K(+) countercurrents for Ca(2+) release from the endoplasmic reticulum (ER) and regulates the frequency and duration of cytosolic Ca(2+) oscillations coupled to secretion of pancreatic hormones. In pancreatic beta cells, drives ER Ca(2+) efflux, which in turn activates Ca(2+)-dependent plasma membrane K(+) slow currents and cytosolic Ca(2+) influx, overall contributing to synchronous cytosolic Ca(2+) oscillations. Limits glucose-induced cytosolic Ca(2+) oscillations coupled to second-phase INS secretion. Contributes to beta cell adaptation to acute inflammation by maintaining normal cytosolic Ca(2+) levels and INS secretion. May regulate beta cell mitochondrial Ca(2+) levels either indirectly via ER Ca(2+) efflux or directly by hyperpolarizing the mitochondrial membrane potential. Limits mitochondrial Ca(2+) oscillations and ATP production involved in glucose homeostasis upon metabolic stress. In pancreatic delta cells, limits Ca(2+)-induced Ca(2+)-release involved in somatostatin secretion and modulates islet paracrine signaling involved in glucagon secretion. Permeable to other monovalent cations such as Rb(+) and Cs(+). The polypeptide is Potassium channel, subfamily K, member 16 (Mus musculus (Mouse)).